The sequence spans 94 residues: Pyrimidine/purine nucleoside phosphorylase 2 (94 aa).

Belongs to the nucleoside phosphorylase PpnP family.

The catalysed reaction is a purine D-ribonucleoside + phosphate = a purine nucleobase + alpha-D-ribose 1-phosphate. It catalyses the reaction adenosine + phosphate = alpha-D-ribose 1-phosphate + adenine. It carries out the reaction cytidine + phosphate = cytosine + alpha-D-ribose 1-phosphate. The enzyme catalyses guanosine + phosphate = alpha-D-ribose 1-phosphate + guanine. The catalysed reaction is inosine + phosphate = alpha-D-ribose 1-phosphate + hypoxanthine. It catalyses the reaction thymidine + phosphate = 2-deoxy-alpha-D-ribose 1-phosphate + thymine. It carries out the reaction uridine + phosphate = alpha-D-ribose 1-phosphate + uracil. The enzyme catalyses xanthosine + phosphate = alpha-D-ribose 1-phosphate + xanthine. Functionally, catalyzes the phosphorolysis of diverse nucleosides, yielding D-ribose 1-phosphate and the respective free bases. Can use uridine, adenosine, guanosine, cytidine, thymidine, inosine and xanthosine as substrates. Also catalyzes the reverse reactions. The polypeptide is Pyrimidine/purine nucleoside phosphorylase 2 (Psychrobacter arcticus (strain DSM 17307 / VKM B-2377 / 273-4)).